Here is a 437-residue protein sequence, read N- to C-terminus: Probable peptidoglycan-N-acetylglucosamine deacetylase ARB_03699 (437 aa).

The signal sequence occupies residues 1 to 20; that stretch reads MLMRLYTFFAAALLACCAAA. The interval 47–132 is disordered; it reads STRAATTTTT…STSAAAPSTP (86 aa). N-linked (GlcNAc...) asparagine glycosylation is present at asparagine 99. Residues 149-334 enclose the NodB homology domain; the sequence is GTVAITFDDG…EVKRRGLKAV (186 aa). Aspartate 156 serves as the catalytic Proton acceptor. Residues aspartate 157, histidine 209, and histidine 213 each contribute to the Zn(2+) site. Tyrosine 251 is a substrate binding site. Histidine 308 serves as the catalytic Proton donor. Low complexity predominate over residues 350-370; that stretch reads TTPVQVPTGTSTTSPTATPTS. A disordered region spans residues 350 to 384; sequence TTPVQVPTGTSTTSPTATPTSPGTPPPAPTQPGVA. Residues 389-435 form the LysM domain; that stretch reads KWHTVVSGDTCYDIAAANGISLDNLYKWNPAVGTSCASLWLGYAVCV.

Zn(2+) is required as a cofactor. Co(2+) serves as cofactor.

Its subcellular location is the secreted. The enzyme catalyses peptidoglycan-N-acetyl-D-glucosamine + H2O = peptidoglycan-D-glucosamine + acetate.. In terms of biological role, catalyzes the deacetylation of N-acetylglucosamine (GlcNAc) residues in peptidoglycan. In Arthroderma benhamiae (strain ATCC MYA-4681 / CBS 112371) (Trichophyton mentagrophytes), this protein is Probable peptidoglycan-N-acetylglucosamine deacetylase ARB_03699.